The sequence spans 421 residues: Imidazolonepropionase (421 aa).

The Fe(3+) site is built by His-80 and His-82. Zn(2+) is bound by residues His-80 and His-82. Arg-89, Tyr-152, and His-185 together coordinate 4-imidazolone-5-propanoate. Position 152 (Tyr-152) interacts with N-formimidoyl-L-glutamate. A Fe(3+)-binding site is contributed by His-249. His-249 serves as a coordination point for Zn(2+). Position 252 (Glu-252) interacts with 4-imidazolone-5-propanoate. Residue Asp-324 coordinates Fe(3+). Asp-324 serves as a coordination point for Zn(2+). Residues Asn-326 and Gly-328 each coordinate N-formimidoyl-L-glutamate. 4-imidazolone-5-propanoate is bound at residue Ser-329.

It belongs to the metallo-dependent hydrolases superfamily. HutI family. The cofactor is Zn(2+). It depends on Fe(3+) as a cofactor.

It localises to the cytoplasm. The enzyme catalyses 4-imidazolone-5-propanoate + H2O = N-formimidoyl-L-glutamate. Its pathway is amino-acid degradation; L-histidine degradation into L-glutamate; N-formimidoyl-L-glutamate from L-histidine: step 3/3. In terms of biological role, catalyzes the hydrolytic cleavage of the carbon-nitrogen bond in imidazolone-5-propanoate to yield N-formimidoyl-L-glutamate. It is the third step in the universal histidine degradation pathway. The protein is Imidazolonepropionase of Bacillus velezensis (strain DSM 23117 / BGSC 10A6 / LMG 26770 / FZB42) (Bacillus amyloliquefaciens subsp. plantarum).